Consider the following 1585-residue polypeptide: uncharacterized protein (1585 aa).

The stretch at 12-59 (DKISRKLRMIQGNAERLKRAANGPLIFEAEDRTERVMRQIDRSANRLT) forms a coiled coil. 2 disordered regions span residues 586-627 (PKRT…SLPR) and 645-692 (IRRR…NPTR). The segment covering 618–627 (TATGPTSLPR) has biased composition (polar residues). Residues 645-655 (IRRRRGKRVLG) show a composition bias toward basic residues. Residues 661–672 (NRMNPSDSSIAV) show a composition bias toward polar residues. Ser970 and Ser972 each carry phosphoserine.

This sequence to B.subtilis XkdO.

This is an uncharacterized protein from Bacillus subtilis (strain 168).